The sequence spans 51 residues: Large ribosomal subunit protein bL33 (51 aa).

It belongs to the bacterial ribosomal protein bL33 family.

The protein is Large ribosomal subunit protein bL33 of Pseudoalteromonas atlantica (strain T6c / ATCC BAA-1087).